The following is an 828-amino-acid chain: Protein TAPT1 homolog (828 aa).

Composition is skewed to low complexity over residues 67 to 83 (NNNN…GNHI), 212 to 233 (QQTQ…SQQP), and 302 to 321 (SNNN…NNNN). Disordered regions lie at residues 67-92 (NNNN…NSSG), 212-236 (QQTQ…PFSY), and 297-346 (QTTP…TSSI). 5 helical membrane-spanning segments follow: residues 428-448 (ISFG…FLPI), 472-492 (QIFD…LNFI), 562-582 (ILGP…HSLV), 722-742 (SSWG…SIVV), and 754-774 (IFGI…KIFI). Over residues 797–822 (LSSSSSSSSSNSLNTTSTTSTSTSTT) the composition is skewed to low complexity. Positions 797–828 (LSSSSSSSSSNSLNTTSTTSTSTSTTNDKKNN) are disordered.

The protein belongs to the TAPT1 family.

It is found in the membrane. In Dictyostelium discoideum (Social amoeba), this protein is Protein TAPT1 homolog.